Here is a 294-residue protein sequence, read N- to C-terminus: 4-hydroxy-tetrahydrodipicolinate synthase (294 aa).

A pyruvate-binding site is contributed by T47. Y135 functions as the Proton donor/acceptor in the catalytic mechanism. K163 (schiff-base intermediate with substrate) is an active-site residue. V205 lines the pyruvate pocket.

The protein belongs to the DapA family. In terms of assembly, homotetramer; dimer of dimers.

The protein localises to the cytoplasm. It catalyses the reaction L-aspartate 4-semialdehyde + pyruvate = (2S,4S)-4-hydroxy-2,3,4,5-tetrahydrodipicolinate + H2O + H(+). It functions in the pathway amino-acid biosynthesis; L-lysine biosynthesis via DAP pathway; (S)-tetrahydrodipicolinate from L-aspartate: step 3/4. Its function is as follows. Catalyzes the condensation of (S)-aspartate-beta-semialdehyde [(S)-ASA] and pyruvate to 4-hydroxy-tetrahydrodipicolinate (HTPA). The protein is 4-hydroxy-tetrahydrodipicolinate synthase of Rickettsia canadensis (strain McKiel).